The following is a 176-amino-acid chain: Sigma intracellular receptor 2 (176 aa).

The Cytoplasmic segment spans residues 1-9; that stretch reads MGAPATRRC. The chain crosses the membrane as a helical span at residues 10–30; sequence VEWLLGLYFLSHIPITLFMDL. The 149-residue stretch at 10–158 folds into the EXPERA domain; the sequence is VEWLLGLYFL…PYLLIPFILL (149 aa). Topologically, residues 31 to 68 are lumenal; it reads QAVLPRELYPVEFRNLLKWYAKEFKDPLLQEPPAWFKS. The chain crosses the membrane as a helical span at residues 69–89; the sequence is FLFCELVFQLPFFPIATYAFL. Residues Val75 and Gln77 each contribute to the cholesterol site. Residues 90-99 lie on the Cytoplasmic side of the membrane; the sequence is KGSCKWIRTP. A helical membrane pass occupies residues 100 to 120; the sequence is AIIYSVHTMTTLIPILSTFLF. Positions 108-176 are required for interaction with Hst1/HTN1; sequence MTTLIPILST…YKYEEKRKKK (69 aa). The Lumenal portion of the chain corresponds to 121–140; it reads EDFSKASGFKGQRPETLHER. Residues 141-161 form a helical membrane-spanning segment; that stretch reads LTLVSVYAPYLLIPFILLIFM. Topologically, residues 162–176 are cytoplasmic; that stretch reads LRSPYYKYEEKRKKK. The ER retention motif signature appears at 172 to 176; it reads KRKKK.

This sequence belongs to the TMEM97/sigma-2 receptor family. Homodimer. Interacts with NPC1; the interaction impairs NPC1-mediated cholesterol transport. Interacts with PGRMC1 and LDLR; the interaction increases LDL internalization. Interacts with histatin 1/HTN1; the interaction induces HTN1-stimulating wound healing. Interacts with TSPO. Forms a complex with TSPO and PGRMC1; the interaction occurs in MIA PaCa-2 cells but not in MCF7 cells. In terms of tissue distribution, widely expressed in normal tissues. Expressed in pancreatic, renal, breast, colon, ovarian surface epithelial (OSE) cells. Highly expressed in various proliferating cancer cells.

It localises to the rough endoplasmic reticulum membrane. It is found in the nucleus membrane. Functionally, sigma-2 receptor which contributes to ameliorate dysfunctional cellular processes and slow degenerative progression by regulating cell functions including cholesterol biosynthesis/trafficking, membrane trafficking, autophagy, lipid membrane-bound protein trafficking, and receptor stabilization at the cell surface. Forms a ternary complex with PGRMC1 receptor and low density lipoprotein receptor/LDLR at the plasma membrane, which increases LDLR-mediated LDL cholesterol internalization. Decreases lysosomal sterol transporter NPC1 availability to the cell, probably through NPC1-binding, hence controlling lipid transport, including cholesterol and LBPA, outside of late endosome/lysosome. Binds regio- and stereoselective ligand 20(S)-hydroxycholesterol (20(S)-OHC) which enhances TMEM97-NPC1 interaction and decreases TMEM97-PGRMC1 and TMEM97-TSPO interactions, thereby linking OHC binding to cholesterol homeostasis. Also able to bind cholesterol. Binds histatin 1 (Hst 1)/HN1 salivary peptide at the ER membrane, which is critical for increasing mitochondria-ER contacts and stimulating Hst1 wound healing properties. May alter the activity of some cytochrome P450 proteins. Although shows homologies with sterol isomerases (EXPERA domain), not able to catalyze sterol isomerization. However, may act as sensors of these molecules. Acts as a quality control factor in the ER, promoting the proteolytic degradation of nonproductive and extramitochondrial precursor proteins in the ER membrane thus removing them from the ER surface. This chain is Sigma intracellular receptor 2, found in Homo sapiens (Human).